Reading from the N-terminus, the 436-residue chain is N-lysine methyltransferase SMYD2 (436 aa).

Residues 10 to 244 (GGLERFASPG…PGEEVFTSYI (235 aa)) enclose the SET domain. Position 20-22 (20-22 (KGR)) interacts with S-adenosyl-L-methionine. Positions 55, 58, 68, 71, 77, 81, 89, and 93 each coordinate Zn(2+). Residues 55 to 93 (CDGCFARKEGLSKCGRCKQAFYCNVECQKEDWPMHKLEC) form an MYND-type zinc finger. Residues histidine 140, 209 to 210 (NH), and 261 to 263 (YFF) contribute to the S-adenosyl-L-methionine site.

It belongs to the class V-like SAM-binding methyltransferase superfamily.

The protein resides in the cytoplasm. Its subcellular location is the cytosol. It is found in the nucleus. It catalyses the reaction L-lysyl(4)-[histone H3] + 3 S-adenosyl-L-methionine = N(6),N(6),N(6)-trimethyl-L-lysyl(4)-[histone H3] + 3 S-adenosyl-L-homocysteine + 3 H(+). The catalysed reaction is L-lysyl-[protein] + S-adenosyl-L-methionine = N(6)-methyl-L-lysyl-[protein] + S-adenosyl-L-homocysteine + H(+). Functionally, protein-lysine N-methyltransferase that methylates both histones and non-histone proteins, including p53/TP53 and RB1. Specifically trimethylates histone H3 'Lys-4' (H3K4me3) in vivo. The activity requires interaction with HSP90alpha. Shows even higher methyltransferase activity on p53/TP53. Monomethylates 'Lys-370' of p53/TP53, leading to decreased DNA-binding activity and subsequent transcriptional regulation activity of p53/TP53. Monomethylates RB1 at 'Lys-860'. In Gallus gallus (Chicken), this protein is N-lysine methyltransferase SMYD2 (SMYD2).